We begin with the raw amino-acid sequence, 104 residues long: NADH-quinone oxidoreductase subunit K (104 aa).

Helical transmembrane passes span 4-24 (VPASAYLTLAIILFCIGLFGA), 31-51 (VIVLVCIELMLNAANLNLVAF), and 67-87 (LFTMSVAAAEAAVGLAILIAL).

The protein belongs to the complex I subunit 4L family. NDH-1 is composed of 14 different subunits. Subunits NuoA, H, J, K, L, M, N constitute the membrane sector of the complex.

The protein localises to the cell membrane. It carries out the reaction a quinone + NADH + 5 H(+)(in) = a quinol + NAD(+) + 4 H(+)(out). In terms of biological role, NDH-1 shuttles electrons from NADH, via FMN and iron-sulfur (Fe-S) centers, to quinones in the respiratory chain. The immediate electron acceptor for the enzyme in this species is believed to be a menaquinone. Couples the redox reaction to proton translocation (for every two electrons transferred, four hydrogen ions are translocated across the cytoplasmic membrane), and thus conserves the redox energy in a proton gradient. This Bacillus mycoides (strain KBAB4) (Bacillus weihenstephanensis) protein is NADH-quinone oxidoreductase subunit K.